Consider the following 174-residue polypeptide: WAP four-disulfide core domain protein 2 (174 aa).

Residues 1-25 (MPACRLCLLAAGLLLGLLLFTPISA) form the signal peptide. Positions 29 to 74 (DAEKPGECPQLEPITDCVLECTLDKDCADNRKCCQAGCSSVCSKPN) constitute a WAP 1 domain. Disulfide bonds link Cys36–Cys62, Cys45–Cys66, Cys49–Cys61, and Cys55–Cys70. The segment at 68 to 117 (SVCSKPNGPSEGELSGTDTKLSETGTTTQSAGLDHTTKPPGGQVSTKPPA) is disordered. A compositionally biased stretch (polar residues) spans 83 to 98 (GTDTKLSETGTTTQSA). A WAP 2 domain is found at 125 to 173 (VREKQGTCPSVDIPKLGLCEDQCQVDSQCSGNMKCCRNGCGKMACTTPK). Intrachain disulfides connect Cys132–Cys160, Cys143–Cys164, Cys147–Cys159, and Cys153–Cys169.

As to quaternary structure, homotrimer; disulfide-linked.

The protein localises to the secreted. In terms of biological role, broad range protease inhibitor. This chain is WAP four-disulfide core domain protein 2 (Wfdc2), found in Mus musculus (Mouse).